The chain runs to 128 residues: uncharacterized protein (128 aa).

2 disordered regions span residues 1–53 (MHLP…PKGR) and 85–105 (PDGP…SGPL).

This is an uncharacterized protein from Escherichia coli.